Reading from the N-terminus, the 344-residue chain is Holliday junction branch migration complex subunit RuvB (344 aa).

A compositionally biased stretch (low complexity) spans 1–10 (MAIQSSSSGS). The interval 1–37 (MAIQSSSSGSKPPAPKRLVAPEATAAEGDGGRDEGLR) is disordered. The tract at residues 13–197 (PAPKRLVAPE…FGLIQRLEFY (185 aa)) is large ATPase domain (RuvB-L). ATP is bound by residues Leu36, Arg37, Gly78, Lys81, Thr82, Thr83, 144 to 146 (EDF), Arg187, Tyr197, and Arg234. Residue Thr82 participates in Mg(2+) binding. A small ATPAse domain (RuvB-S) region spans residues 198–268 (SCSDLEAIVS…VVVEALAMHR (71 aa)). A head domain (RuvB-H) region spans residues 271–344 (GRGLDPSDRR…DAGRAHLEAA (74 aa)). Arg326 and Arg331 together coordinate DNA.

Belongs to the RuvB family. Homohexamer. Forms an RuvA(8)-RuvB(12)-Holliday junction (HJ) complex. HJ DNA is sandwiched between 2 RuvA tetramers; dsDNA enters through RuvA and exits via RuvB. An RuvB hexamer assembles on each DNA strand where it exits the tetramer. Each RuvB hexamer is contacted by two RuvA subunits (via domain III) on 2 adjacent RuvB subunits; this complex drives branch migration. In the full resolvosome a probable DNA-RuvA(4)-RuvB(12)-RuvC(2) complex forms which resolves the HJ.

It is found in the cytoplasm. The enzyme catalyses ATP + H2O = ADP + phosphate + H(+). In terms of biological role, the RuvA-RuvB-RuvC complex processes Holliday junction (HJ) DNA during genetic recombination and DNA repair, while the RuvA-RuvB complex plays an important role in the rescue of blocked DNA replication forks via replication fork reversal (RFR). RuvA specifically binds to HJ cruciform DNA, conferring on it an open structure. The RuvB hexamer acts as an ATP-dependent pump, pulling dsDNA into and through the RuvAB complex. RuvB forms 2 homohexamers on either side of HJ DNA bound by 1 or 2 RuvA tetramers; 4 subunits per hexamer contact DNA at a time. Coordinated motions by a converter formed by DNA-disengaged RuvB subunits stimulates ATP hydrolysis and nucleotide exchange. Immobilization of the converter enables RuvB to convert the ATP-contained energy into a lever motion, pulling 2 nucleotides of DNA out of the RuvA tetramer per ATP hydrolyzed, thus driving DNA branch migration. The RuvB motors rotate together with the DNA substrate, which together with the progressing nucleotide cycle form the mechanistic basis for DNA recombination by continuous HJ branch migration. Branch migration allows RuvC to scan DNA until it finds its consensus sequence, where it cleaves and resolves cruciform DNA. In Synechococcus sp. (strain RCC307), this protein is Holliday junction branch migration complex subunit RuvB.